A 481-amino-acid chain; its full sequence is GTPase Obg (481 aa).

The Obg domain maps to 2 to 159; that stretch reads TTFVDRVVLH…LDAVLELKSV (158 aa). Residues 160 to 330 form the OBG-type G domain; the sequence is ADIGLVGYPS…LMFAMGELVA (171 aa). GTP-binding positions include 166–173, 191–195, 212–215, 282–285, and 311–313; these read GYPSAGKS, FTTLV, DVPG, NKID, and SAA. Serine 173 and threonine 193 together coordinate Mg(2+). The OCT domain occupies 348–426; that stretch reads PKAVDDAGFT…IGEREFDWHP (79 aa). Residues 440–481 are disordered; it reads DQRLAEKTQRPSAAERLAARKARRQRPGDEPESDELDGDSGE. The span at 469–481 shows a compositional bias: acidic residues; sequence EPESDELDGDSGE.

Belongs to the TRAFAC class OBG-HflX-like GTPase superfamily. OBG GTPase family. In terms of assembly, monomer. The cofactor is Mg(2+).

Its subcellular location is the cytoplasm. In terms of biological role, an essential GTPase which binds GTP, GDP and possibly (p)ppGpp with moderate affinity, with high nucleotide exchange rates and a fairly low GTP hydrolysis rate. Plays a role in control of the cell cycle, stress response, ribosome biogenesis and in those bacteria that undergo differentiation, in morphogenesis control. The chain is GTPase Obg from Salinispora arenicola (strain CNS-205).